We begin with the raw amino-acid sequence, 210 residues long: Redox-sensing transcriptional repressor Rex (210 aa).

A DNA-binding region (H-T-H motif) is located at residues 17 to 56 (SYLHLVKKAEADKLEYISGTVIAEELELEPIQVRKDLTIT). 91–96 (GAGSLG) serves as a coordination point for NAD(+).

The protein belongs to the transcriptional regulatory Rex family. As to quaternary structure, homodimer.

It is found in the cytoplasm. Functionally, modulates transcription in response to changes in cellular NADH/NAD(+) redox state. The chain is Redox-sensing transcriptional repressor Rex from Treponema denticola (strain ATCC 35405 / DSM 14222 / CIP 103919 / JCM 8153 / KCTC 15104).